Consider the following 1984-residue polypeptide: Sodium channel protein type 9 subunit alpha (1984 aa).

Over 1–125 (MAMLPPPGPQ…RRISIKILVH (125 aa)) the chain is Cytoplasmic. Residues 26–39 (RISEEKAKGHKDEK) show a composition bias toward basic and acidic residues. The tract at residues 26–55 (RISEEKAKGHKDEKKDDEEEGPKPSSDLEA) is disordered. The stretch at 112–410 (FSPLRRISIK…VAMAYEEQNQ (299 aa)) is one I repeat. Residues 126–145 (SLFSMLIMCTILTNCIFMTM) form a helical membrane-spanning segment. At 146 to 150 (SNPPD) the chain is on the extracellular side. The chain crosses the membrane as a helical span at residues 151–172 (WTKNVEYTFTGIYTFESLIKIL). Residues 173–185 (ARGFCVGEFTFLR) are Cytoplasmic-facing. The helical transmembrane segment at 186–204 (DPWNWLDFVVIVFAYLTEF) threads the bilayer. Topologically, residues 205-210 (VNLGNV) are extracellular. Residues 211–227 (SALRTFRVLRALKTISV) form a helical membrane-spanning segment. At 228–241 (IPGLKTIVGALIQS) the chain is on the cytoplasmic side. A helical membrane pass occupies residues 242–267 (VKKLSDVMILTVFCLSVFALIGLQLF). At 268–346 (MGNLKHKCFR…PDYGYTSFDT (79 aa)) the chain is on the extracellular side. Cys275 and Cys324 are oxidised to a cystine. The pore-forming intramembrane region spans 347 to 363 (FGWAFLALFRLMTQDYW). The Extracellular portion of the chain corresponds to 364-376 (ENLYQQTLRAAGK). A helical membrane pass occupies residues 377–402 (TYMIFFVVVIFLGSFYLINLILAVVA). Residues 402 to 449 (AMAYEEQNQANIEEAKQKELEFQQMLDRLKKEQEEAEAIAAAAAEYTS) are a coiled coil. At 403-744 (MAYEEQNQAN…FIYFIVMDPF (342 aa)) the chain is on the cytoplasmic side. Residues 458–471 (LSESSSETSRLSSK) show a composition bias toward low complexity. Disordered stretches follow at residues 458–540 (LSES…SIRG) and 574–609 (HSIF…RSPP). The span at 474 to 486 (KERRNRRKKKKQK) shows a compositional bias: basic residues. Composition is skewed to basic and acidic residues over residues 489-509 (SGEE…ESIR) and 574-584 (HSIFGDNESRR). Residues 684–708 (LRQRAMSRASILTNTVEELEESRQK) are a coiled coil. One copy of the II repeat lies at 725–988 (CSPYWIKFKK…EEDTDANNLQ (264 aa)). The helical transmembrane segment at 745 to 761 (VDLAITICIVLNTLFMA) threads the bilayer. Topologically, residues 762–770 (MEHHPMTDE) are extracellular. A helical membrane pass occupies residues 771–795 (FKNVLAVGNLVFTGIFAAEMVLKLI). The Cytoplasmic portion of the chain corresponds to 796–804 (AMDPYEYFQ). Residues 805–821 (VGWNIFDSLIVTLSLVE) form a helical membrane-spanning segment. Over 822 to 830 (LFLADVEGL) the chain is Extracellular. A helical transmembrane segment spans residues 831-847 (SVLRSFRLLRVFKLAKS). The Cytoplasmic segment spans residues 848–864 (WPTLNMLIKIIGNSVGA). A helical membrane pass occupies residues 865–887 (LGNLTLVLAIIVFIFAVVGMQLF). At 888 to 914 (GKSYKECVCKINENCKLPRWHMNDFFH) the chain is on the extracellular side. A disulfide bridge connects residues Cys896 and Cys902. The pore-forming intramembrane region spans 915–927 (SFLIVFRVLCGEW). Residues 928–939 (IETMWDCMEVAG) are Extracellular-facing. An intrachain disulfide couples Cys934 to Cys943. The chain crosses the membrane as a helical span at residues 940–966 (QTMCLIVYMMVMVIGNLVVLNLFLALL). The Cytoplasmic portion of the chain corresponds to 967–1185 (LSSFSSDNLT…WWTIRKTCYR (219 aa)). 2 disordered regions span residues 1015-1039 (KKPK…YISN) and 1089-1145 (PIAP…EPIN). The span at 1019-1035 (GSKDTKRTADPNNKREN) shows a compositional bias: basic and acidic residues. A compositionally biased stretch (acidic residues) spans 1135 to 1145 (GEEEAEAEPIN). The stretch at 1178 to 1486 (TIRKTCYRIV…KKYYNAMKKL (309 aa)) is one III repeat. The chain crosses the membrane as a helical span at residues 1186 to 1210 (IVEHSWFESFIVLMILLSSGALAFE). Residues 1211–1222 (DIYIEKKKTIKI) are Extracellular-facing. The helical transmembrane segment at 1223-1248 (ILEYADKIFTYIFILEMLLKWVAYGY) threads the bilayer. Residues 1249 to 1250 (KT) lie on the Cytoplasmic side of the membrane. A helical membrane pass occupies residues 1251-1276 (YFTNAWCWLDFLIVDVSLVTLVANTL). Topologically, residues 1277–1285 (GYSDLGPIK) are extracellular. Residues 1286 to 1302 (SLRTLRALRPLRALSRF) form a helical membrane-spanning segment. Over 1303–1315 (EGMRVVVNALIGA) the chain is Cytoplasmic. The chain crosses the membrane as a helical span at residues 1316–1340 (IPSIMNVLLVCLIFWLIFSIMGVNL). Over 1341-1392 (FAGKFYECVNTTDGSRFSVSQVANRSECFALMNVSGNVRWKNLKVNFDNVGL) the chain is Extracellular. Cys1348 and Cys1368 form a disulfide bridge. Positions 1393 to 1403 (GYLSLLQVATF) form an intramembrane region, pore-forming. Residues 1404–1429 (KGWMDIMYAAVDSVNVNAQPIYEYNL) are Extracellular-facing. Residues 1430-1455 (YMYIYFVIFIIFGSFFTLNLFIGVII) form a helical membrane-spanning segment. The Cytoplasmic portion of the chain corresponds to 1456–1512 (DNFNQQKKKLGGQDIFMTEEQKKYYNAMKKLGSKKPQKPIPRPGNKFQGCIFDLVTN). Ser1488 is modified (phosphoserine; by PKC). Residues 1495–1793 (IPRPGNKFQG…WEKFDPDATQ (299 aa)) form an IV repeat. The helical transmembrane segment at 1513 to 1532 (QAFDITIMVLICLNMVTMMV) threads the bilayer. Residues 1533–1543 (EKEGQTDYMSF) are Extracellular-facing. Residues 1544 to 1565 (VLYWINVVFIILFTGECVLKLI) form a helical membrane-spanning segment. Residues 1566–1574 (SLRHYYFTV) are Cytoplasmic-facing. The chain crosses the membrane as a helical span at residues 1575–1596 (GWNIFDFVVVILSIVGMFLAEM). Residues 1597 to 1605 (IEKYFVSPT) are Extracellular-facing. Residues 1606–1625 (LFRVIRLARIGRILRLIKGA) traverse the membrane as a helical segment. The Cytoplasmic segment spans residues 1626–1638 (KGIRTLLFALMMS). The helical transmembrane segment at 1639 to 1661 (LPALFNIGLLLFLVMFIYAIFGM) threads the bilayer. Topologically, residues 1662–1684 (SNFAYVKKEAGINDMFNFETFGN) are extracellular. The pore-forming intramembrane region spans 1685–1697 (SMICLFQITTSAG). At 1698-1731 (WDGLLAPILNSAPPDCDPKKVHPGSSVEGDCGNP) the chain is on the extracellular side. An intrachain disulfide couples Cys1713 to Cys1728. Residues 1732 to 1757 (SVGIFYFVSYIIISFLVVVNMYIAVI) traverse the membrane as a helical segment. Topologically, residues 1758–1984 (LENFSVATEE…EDKEKDESRK (227 aa)) are cytoplasmic. Positions 1887 to 1916 (EDVSATIIQRAYRRYRLRQNVKNISSIYIK) constitute an IQ domain. Positions 1933-1984 (DNVNENSSPEKTDATASTISPPSYDSVTKPDQEKYETDKTEKEDKEKDESRK) are disordered. Residues 1946 to 1958 (ATASTISPPSYDS) are compositionally biased toward polar residues. A compositionally biased stretch (basic and acidic residues) spans 1960–1984 (TKPDQEKYETDKTEKEDKEKDESRK).

This sequence belongs to the sodium channel (TC 1.A.1.10) family. Nav1.7/SCN9A subfamily. As to quaternary structure, the Nav1.7 voltage-gated sodium channel consists of an ion-conducting alpha subunit SCN9A which is functional on its own regulated by one or more beta-1 (SCN1B), beta-2 (SCN2B), beta-3 (SCN3B) and beta-4 (SCN4B) subunits. SCN1B and SCN3B are non-covalently associated with SCN9A. SCN2B and SCN4B are disulfide-linked to SCN9A. SCN1B regulates channel inactivation. Interacts with NEDD4 and NEDD4L; regulates Nav1.7 activity most probably through ubiquitination and subsequent endocytosis. Interacts with TMEM233; modulates the gating properties of NaV1.7. In terms of processing, ubiquitinated by NEDD4L; which may promote its endocytosis. Post-translationally, phosphorylation at Ser-1488 by PKC in a highly conserved cytoplasmic loop increases peak sodium currents. In terms of tissue distribution, expressed strongly in sciatic nerves, with moderate levels in kidney. Not detected in liver, brain and muscle.

The protein localises to the cell membrane. It is found in the cell projection. It localises to the neuron projection. Its subcellular location is the axon. The enzyme catalyses Na(+)(in) = Na(+)(out). Its function is as follows. Pore-forming subunit of Nav1.7, a voltage-gated sodium (Nav) channel that directly mediates the depolarizing phase of action potentials in excitable membranes. Navs, also called VGSCs (voltage-gated sodium channels) or VDSCs (voltage-dependent sodium channels), operate by switching between closed and open conformations depending on the voltage difference across the membrane. In the open conformation they allow Na(+) ions to selectively pass through the pore, along their electrochemical gradient. The influx of Na(+) ions provokes membrane depolarization, initiating the propagation of electrical signals throughout cells and tissues. Nav1.7 plays a crucial role in controlling the excitability and action potential propagation from nociceptor neurons, thereby contributing to the sensory perception of pain. The polypeptide is Sodium channel protein type 9 subunit alpha (Mus musculus (Mouse)).